A 218-amino-acid polypeptide reads, in one-letter code: Large ribosomal subunit protein uL16 (218 aa).

Belongs to the universal ribosomal protein uL16 family. As to quaternary structure, component of the large ribosomal subunit. Mature ribosomes consist of a small (40S) and a large (60S) subunit. The 40S subunit contains about 33 different proteins and 1 molecule of RNA (18S). The 60S subunit contains about 49 different proteins and 3 molecules of RNA (28S, 5.8S and 5S).

The chain is Large ribosomal subunit protein uL16 (RpL10) from Drosophila melanogaster (Fruit fly).